Here is a 226-residue protein sequence, read N- to C-terminus: Leucyl/phenylalanyl-tRNA--protein transferase (226 aa).

It belongs to the L/F-transferase family.

It is found in the cytoplasm. The enzyme catalyses N-terminal L-lysyl-[protein] + L-leucyl-tRNA(Leu) = N-terminal L-leucyl-L-lysyl-[protein] + tRNA(Leu) + H(+). The catalysed reaction is N-terminal L-arginyl-[protein] + L-leucyl-tRNA(Leu) = N-terminal L-leucyl-L-arginyl-[protein] + tRNA(Leu) + H(+). It carries out the reaction L-phenylalanyl-tRNA(Phe) + an N-terminal L-alpha-aminoacyl-[protein] = an N-terminal L-phenylalanyl-L-alpha-aminoacyl-[protein] + tRNA(Phe). Its function is as follows. Functions in the N-end rule pathway of protein degradation where it conjugates Leu, Phe and, less efficiently, Met from aminoacyl-tRNAs to the N-termini of proteins containing an N-terminal arginine or lysine. The protein is Leucyl/phenylalanyl-tRNA--protein transferase of Salinibacter ruber (strain DSM 13855 / M31).